Consider the following 553-residue polypeptide: Arginine--tRNA ligase (553 aa).

The 'HIGH' region motif lies at 130-140 (ANPTGDLHIGH).

It belongs to the class-I aminoacyl-tRNA synthetase family. Monomer.

It localises to the cytoplasm. The enzyme catalyses tRNA(Arg) + L-arginine + ATP = L-arginyl-tRNA(Arg) + AMP + diphosphate. This chain is Arginine--tRNA ligase, found in Staphylococcus aureus (strain USA300 / TCH1516).